We begin with the raw amino-acid sequence, 576 residues long: Arginine--tRNA ligase (576 aa).

The 'HIGH' region signature appears at 126 to 136 (ANPTGPMHIGH).

It belongs to the class-I aminoacyl-tRNA synthetase family. In terms of assembly, monomer.

It is found in the cytoplasm. The catalysed reaction is tRNA(Arg) + L-arginine + ATP = L-arginyl-tRNA(Arg) + AMP + diphosphate. This Rickettsia felis (strain ATCC VR-1525 / URRWXCal2) (Rickettsia azadi) protein is Arginine--tRNA ligase.